Here is an 81-residue protein sequence, read N- to C-terminus: Photosystem I iron-sulfur center (81 aa).

4Fe-4S ferredoxin-type domains follow at residues 2–31 (SHTV…MIPW) and 39–68 (IASS…VRVY). Residues cysteine 11, cysteine 14, cysteine 17, cysteine 21, cysteine 48, cysteine 51, cysteine 54, and cysteine 58 each coordinate [4Fe-4S] cluster.

In terms of assembly, the eukaryotic PSI reaction center is composed of at least 11 subunits. [4Fe-4S] cluster is required as a cofactor.

It is found in the plastid. Its subcellular location is the chloroplast thylakoid membrane. It carries out the reaction reduced [plastocyanin] + hnu + oxidized [2Fe-2S]-[ferredoxin] = oxidized [plastocyanin] + reduced [2Fe-2S]-[ferredoxin]. Apoprotein for the two 4Fe-4S centers FA and FB of photosystem I (PSI); essential for photochemical activity. FB is the terminal electron acceptor of PSI, donating electrons to ferredoxin. The C-terminus interacts with PsaA/B/D and helps assemble the protein into the PSI complex. Required for binding of PsaD and PsaE to PSI. PSI is a plastocyanin-ferredoxin oxidoreductase, converting photonic excitation into a charge separation, which transfers an electron from the donor P700 chlorophyll pair to the spectroscopically characterized acceptors A0, A1, FX, FA and FB in turn. The sequence is that of Photosystem I iron-sulfur center from Chaetosphaeridium globosum (Charophycean green alga).